We begin with the raw amino-acid sequence, 177 residues long: Ribonuclease alpha-sarcin (177 aa).

The first 27 residues, 1–27 (MVAIKNLVLVALTAVTALAVPSPLEAR), serve as a signal peptide directing secretion. 2 cysteine pairs are disulfide-bonded: Cys-33-Cys-175 and Cys-103-Cys-159. His-77 is an active-site residue. The segment at 86-119 (DGKLPKGRTPIKFGKSDCDRPPKHSKDGNGKTDH) is disordered. The segment covering 99–119 (GKSDCDRPPKHSKDGNGKTDH) has biased composition (basic and acidic residues). The active-site Proton acceptor is the Glu-123. The active-site Proton donor is the His-164.

It belongs to the ribonuclease U2 family.

The protein resides in the secreted. The catalysed reaction is a 28S rRNA containing guanosine-adenosine pair + H2O = an [RNA fragment]-3'-adenosine-3'-phosphate + a 5'-a hydroxy-guanosine-3'-[RNA fragment].. In terms of biological role, alpha-sarcin is specific for purines in both single- and double-stranded RNA. Its toxic action on eukaryotic cells is the result of cleavage of a single phosphodiester bond in the 60S subunit of ribosomes. Inhibits both the EFl (elongation factor 1)-dependent binding of aminoacyl-tRNA and the GTP-dependent binding of EF2 (elongation factor 2) to ribosomes. The polypeptide is Ribonuclease alpha-sarcin (sar) (Aspergillus giganteus).